The primary structure comprises 239 residues: Proteasome activator complex subunit 2 (239 aa).

Alanine 2 carries the post-translational modification N-acetylalanine. A Phosphoserine modification is found at serine 10. Positions 65 to 87 are disordered; it reads DIPIPDPPPKDDEMETDKQEKKE. The span at 72–87 shows a compositional bias: basic and acidic residues; that stretch reads PPKDDEMETDKQEKKE.

Belongs to the PA28 family. In terms of assembly, heterodimer of PSME1 and PSME2, which forms a hexameric ring.

Functionally, implicated in immunoproteasome assembly and required for efficient antigen processing. The PA28 activator complex enhances the generation of class I binding peptides by altering the cleavage pattern of the proteasome. This chain is Proteasome activator complex subunit 2 (Psme2), found in Mus musculus (Mouse).